We begin with the raw amino-acid sequence, 68 residues long: Small ribosomal subunit protein bS21 (68 aa).

Belongs to the bacterial ribosomal protein bS21 family.

In Ruegeria sp. (strain TM1040) (Silicibacter sp.), this protein is Small ribosomal subunit protein bS21.